The sequence spans 305 residues: Uracil-DNA glycosylase (305 aa).

Asp-148 acts as the Proton acceptor in catalysis.

It belongs to the uracil-DNA glycosylase (UDG) superfamily. UNG family.

It is found in the host nucleus. The catalysed reaction is Hydrolyzes single-stranded DNA or mismatched double-stranded DNA and polynucleotides, releasing free uracil.. In terms of biological role, excises uracil residues from the DNA which can arise as a result of misincorporation of dUMP residues by DNA polymerase or deamination of cytosines. Therefore may reduce deleterious uracil incorporation into the viral genome, particularly in terminally differentiated cells which lack DNA repair enzymes. The sequence is that of Uracil-DNA glycosylase from Varicella-zoster virus (strain Dumas) (HHV-3).